Here is a 432-residue protein sequence, read N- to C-terminus: Glutamate-1-semialdehyde 2,1-aminomutase 1 (432 aa).

An N6-(pyridoxal phosphate)lysine modification is found at lysine 268.

It belongs to the class-III pyridoxal-phosphate-dependent aminotransferase family. HemL subfamily. In terms of assembly, homodimer. Pyridoxal 5'-phosphate is required as a cofactor.

It is found in the cytoplasm. It carries out the reaction (S)-4-amino-5-oxopentanoate = 5-aminolevulinate. It functions in the pathway porphyrin-containing compound metabolism; protoporphyrin-IX biosynthesis; 5-aminolevulinate from L-glutamyl-tRNA(Glu): step 2/2. The chain is Glutamate-1-semialdehyde 2,1-aminomutase 1 from Bacillus cereus (strain B4264).